We begin with the raw amino-acid sequence, 272 residues long: Small ribosomal subunit biogenesis GTPase RsgA (272 aa).

A CP-type G domain is found at 56–207; that stretch reads KNILIRPKVA…IIDTPGFSSI (152 aa). Residues 105–108 and 151–159 contribute to the GTP site; these read TKAD and GQSGVGKTT. Zn(2+) contacts are provided by C230, C235, H237, and C245.

Belongs to the TRAFAC class YlqF/YawG GTPase family. RsgA subfamily. In terms of assembly, monomer. Associates with 30S ribosomal subunit, binds 16S rRNA. It depends on Zn(2+) as a cofactor.

The protein resides in the cytoplasm. Functionally, one of several proteins that assist in the late maturation steps of the functional core of the 30S ribosomal subunit. Helps release RbfA from mature subunits. May play a role in the assembly of ribosomal proteins into the subunit. Circularly permuted GTPase that catalyzes slow GTP hydrolysis, GTPase activity is stimulated by the 30S ribosomal subunit. The chain is Small ribosomal subunit biogenesis GTPase RsgA from Mycoplasmopsis pulmonis (strain UAB CTIP) (Mycoplasma pulmonis).